The primary structure comprises 210 residues: Large ribosomal subunit protein uL4 (210 aa).

The segment at 46 to 77 (QGTHKSKERGEIAGSTKKIKKQKGTGTARAGS) is disordered.

Belongs to the universal ribosomal protein uL4 family. As to quaternary structure, part of the 50S ribosomal subunit.

Functionally, one of the primary rRNA binding proteins, this protein initially binds near the 5'-end of the 23S rRNA. It is important during the early stages of 50S assembly. It makes multiple contacts with different domains of the 23S rRNA in the assembled 50S subunit and ribosome. Its function is as follows. Forms part of the polypeptide exit tunnel. This chain is Large ribosomal subunit protein uL4, found in Amoebophilus asiaticus (strain 5a2).